Here is a 685-residue protein sequence, read N- to C-terminus: Putative lipase ROG1 (685 aa).

The Charge relay system role is filled by serine 269.

This sequence belongs to the putative lipase ROG1 family.

The chain is Putative lipase ROG1 (ROG1) from Saccharomyces cerevisiae (strain ATCC 204508 / S288c) (Baker's yeast).